Consider the following 449-residue polypeptide: Exopolygalacturonase X-2 (449 aa).

An N-terminal signal peptide occupies residues 1–24; sequence MGFKRTIGLLLGILLALDQVSVLA. N-linked (GlcNAc...) asparagine glycosylation is found at Asn-136, Asn-172, and Asn-208. A PbH1 1 repeat occupies 240-261; the sequence is SDNVVIQNSVINHDDDCVSFKP. The Proton donor role is filled by Asp-254. The cysteines at positions 256 and 273 are disulfide-linked. Asn-262 and Asn-274 each carry an N-linked (GlcNAc...) asparagine glycan. 2 PbH1 repeats span residues 263 to 283 and 294 to 315; these read STNI…SVGS and VSDL…RLKV. The active site involves His-277. N-linked (GlcNAc...) asparagine glycans are attached at residues Asn-301, Asn-306, Asn-340, and Asn-365. The cysteines at positions 403 and 409 are disulfide-linked. N-linked (GlcNAc...) asparagine glycans are attached at residues Asn-416 and Asn-421.

This sequence belongs to the glycosyl hydrolase 28 family.

It is found in the secreted. It carries out the reaction [(1-&gt;4)-alpha-D-galacturonosyl](n) + H2O = alpha-D-galacturonate + [(1-&gt;4)-alpha-D-galacturonosyl](n-1). In terms of biological role, specific in hydrolyzing the terminal glycosidic bond of polygalacturonic acid and oligogalacturonates. This Emericella nidulans (strain FGSC A4 / ATCC 38163 / CBS 112.46 / NRRL 194 / M139) (Aspergillus nidulans) protein is Exopolygalacturonase X-2 (pgaX-2).